A 264-amino-acid chain; its full sequence is Proliferating cell nuclear antigen 2 (264 aa).

This sequence belongs to the PCNA family. As to quaternary structure, homotrimer. Oligomer. Interacts with ORC1 (via PIP-box motif). Interacts with FEN1.

The protein localises to the nucleus. It localises to the chromosome. It is found in the cytoplasm. May be involved in DNA damage response. Appears not to be involved in DNA replication in trophozoites. The protein is Proliferating cell nuclear antigen 2 of Plasmodium falciparum (isolate 3D7).